Reading from the N-terminus, the 211-residue chain is Riboflavin kinase (211 aa).

An H-T-H motif-like region spans residues 1 to 81; it reads MKCIDRRLIG…DLLRYFNILS (81 aa). The tract at residues 82–211 is riboflavin kinase; it reads IRLSGRVVSG…DRVEIEIYLE (130 aa). 91–96 is a CDP binding site; the sequence is GLGEGA. Mg(2+)-binding residues include T120 and N122. FMN contacts are provided by T177 and E185. 190–193 serves as a coordination point for CDP; the sequence is FKLR.

Belongs to the archaeal riboflavin kinase family. It depends on Mg(2+) as a cofactor.

It catalyses the reaction riboflavin + CTP = CDP + FMN + H(+). It functions in the pathway cofactor biosynthesis; FMN biosynthesis; FMN from riboflavin (CTP route): step 1/1. Catalyzes the CTP-dependent phosphorylation of riboflavin (vitamin B2) to form flavin mononucleotide (FMN). The protein is Riboflavin kinase (ribK) of Pyrobaculum islandicum (strain DSM 4184 / JCM 9189 / GEO3).